The primary structure comprises 392 residues: Probable Ni/Fe-hydrogenase 2 b-type cytochrome subunit (392 aa).

Over 1–11 (MSHDPQPLGGK) the chain is Periplasmic. A helical membrane pass occupies residues 12–32 (IISKPVMIFGPLIVICMLLIV). At 33-34 (KR) the chain is on the cytoplasmic side. The helical transmembrane segment at 35 to 55 (LVFGLGSVSDLNGGFPWGVWI) threads the bilayer. At 56 to 58 (AFD) the chain is on the periplasmic side. Residues 59–79 (LLIGTGFACGGWALAWAVYVF) form a helical membrane-spanning segment. Residues 80 to 90 (NRGQYHPLVRP) lie on the Cytoplasmic side of the membrane. Residues 91 to 111 (ALLASLFGYSLGGLSITIDVG) form a helical membrane-spanning segment. At 112 to 133 (RYWNLPYFYIPGHFNVNSVLFE) the chain is on the periplasmic side. The helical transmembrane segment at 134-154 (TAVCMTIYIGVMALEFAPALF) threads the bilayer. The Cytoplasmic portion of the chain corresponds to 155–168 (ERLGWKVSLQRLNK). A helical transmembrane segment spans residues 169 to 189 (VMFFIIALGALLPTMHQSSMG). Topologically, residues 190 to 207 (SLMISAGYKVHPLWQSYE) are periplasmic. A helical transmembrane segment spans residues 208-228 (MLPLFSLLTAFIMGFSIVIFE). The Cytoplasmic portion of the chain corresponds to 229–249 (GSLVQAGLRGNGPDEKSLFVK). Residues 250-270 (LTNTISVLLAIFIVLRFGELI) form a helical membrane-spanning segment. Residues 271–281 (YRDKLSLAFAG) are Periplasmic-facing. Residues 282–302 (DFYSVMFWIEVLLMLFPLVVL) traverse the membrane as a helical segment. The Cytoplasmic portion of the chain corresponds to 303–333 (RVAKLRNDSRMLFLSALSALLGCATWRLTYS). The helical transmembrane segment at 334–354 (LVAFNPGGGYAYFPTWEELLI) threads the bilayer. Position 355 (Ser-355) is a topological domain, periplasmic. The helical transmembrane segment at 356-376 (IGFVAIEICAYIVLIRLLPIL) threads the bilayer. The Cytoplasmic segment spans residues 377-392 (PPLKQNDHNRHEASKA).

The protein belongs to the NrfD family.

It localises to the cell inner membrane. Functionally, probable b-type cytochrome. This is Probable Ni/Fe-hydrogenase 2 b-type cytochrome subunit (hybB) from Escherichia coli (strain K12).